The chain runs to 122 residues: MLTKPDRKAIRAKRRRRVRNKILGTAARPRLNVFRSLNNMYAQLIDDETGVTVVAASTLSPELKETFKNGGNVEAAKAVGDLVGKLALEKGIKEVVFDRAGYLYHGRVKALAEAAREAGLDF.

It belongs to the universal ribosomal protein uL18 family. As to quaternary structure, part of the 50S ribosomal subunit; part of the 5S rRNA/L5/L18/L25 subcomplex. Contacts the 5S and 23S rRNAs.

This is one of the proteins that bind and probably mediate the attachment of the 5S RNA into the large ribosomal subunit, where it forms part of the central protuberance. The chain is Large ribosomal subunit protein uL18 from Desulforamulus reducens (strain ATCC BAA-1160 / DSM 100696 / MI-1) (Desulfotomaculum reducens).